Reading from the N-terminus, the 442-residue chain is Tubulin beta chain (442 aa).

Positions 11, 69, 138, 142, 143, 144, 204, and 226 each coordinate GTP. Glutamate 69 provides a ligand contact to Mg(2+). The interval 421-442 (EYQQYQDATAEDEEEMDEEQME) is disordered. Residues 429–442 (TAEDEEEMDEEQME) are compositionally biased toward acidic residues.

The protein belongs to the tubulin family. In terms of assembly, dimer of alpha and beta chains. A typical microtubule is a hollow water-filled tube with an outer diameter of 25 nm and an inner diameter of 15 nM. Alpha-beta heterodimers associate head-to-tail to form protofilaments running lengthwise along the microtubule wall with the beta-tubulin subunit facing the microtubule plus end conferring a structural polarity. Microtubules usually have 13 protofilaments but different protofilament numbers can be found in some organisms and specialized cells. The cofactor is Mg(2+).

Its subcellular location is the cytoplasm. The protein resides in the cytoskeleton. Functionally, tubulin is the major constituent of microtubules, a cylinder consisting of laterally associated linear protofilaments composed of alpha- and beta-tubulin heterodimers. Microtubules grow by the addition of GTP-tubulin dimers to the microtubule end, where a stabilizing cap forms. Below the cap, tubulin dimers are in GDP-bound state, owing to GTPase activity of alpha-tubulin. The chain is Tubulin beta chain (TUBB1) from Stylonychia lemnae (Ciliate).